The chain runs to 299 residues: Quinolinate synthase (299 aa).

Iminosuccinate is bound by residues histidine 21 and serine 38. Cysteine 83 lines the [4Fe-4S] cluster pocket. Residues 109-111 (YVN) and serine 126 each bind iminosuccinate. [4Fe-4S] cluster is bound at residue cysteine 170. Iminosuccinate is bound by residues 196–198 (HPE) and threonine 213. Residue cysteine 256 participates in [4Fe-4S] cluster binding.

This sequence belongs to the quinolinate synthase family. Type 2 subfamily. Requires [4Fe-4S] cluster as cofactor.

The protein resides in the cytoplasm. The enzyme catalyses iminosuccinate + dihydroxyacetone phosphate = quinolinate + phosphate + 2 H2O + H(+). It functions in the pathway cofactor biosynthesis; NAD(+) biosynthesis; quinolinate from iminoaspartate: step 1/1. Catalyzes the condensation of iminoaspartate with dihydroxyacetone phosphate to form quinolinate. The chain is Quinolinate synthase from Pyrococcus abyssi (strain GE5 / Orsay).